The primary structure comprises 397 residues: DnaJ homolog subfamily A member 1 (397 aa).

The region spanning 6–68 (TYYDVLGVKP…KKRELYDKGG (63 aa)) is the J domain. Lysine 66 is modified (N6-acetyllysine). Phosphoserine is present on serine 83. The CR-type zinc finger occupies 121-205 (GATRKLALQK…CNGRKIVREK (85 aa)). Zn(2+) contacts are provided by cysteine 134, cysteine 137, cysteine 150, cysteine 153, cysteine 177, cysteine 180, cysteine 193, and cysteine 196. 4 CXXCXGXG motif repeats span residues 134–141 (CDKCEGRG), 150–157 (CPNCRGTG), 177–184 (CMECQGHG), and 193–200 (CKSCNGRK). The residue at position 335 (serine 335) is a Phosphoserine. The disordered stretch occupies residues 352–397 (VEETDEMDQVELVDFDPNQERRRHYNGEAYEDDEHHPRGGVQCQTS). Residues 353-365 (EETDEMDQVELVD) are compositionally biased toward acidic residues. At tyrosine 381 the chain carries Phosphotyrosine. The residue at position 394 (cysteine 394) is a Cysteine methyl ester. Cysteine 394 is lipidated: S-farnesyl cysteine. A propeptide spans 395–397 (QTS) (removed in mature form).

As to quaternary structure, identified in a complex with HSPA1B and BAX. Interacts with RNF207.

It is found in the membrane. It localises to the cytoplasm. The protein localises to the microsome. The protein resides in the mitochondrion. Its subcellular location is the nucleus. It is found in the perinuclear region. Functionally, co-chaperone for HSPA8/Hsc70. Plays a role in protein transport into mitochondria via its role as co-chaperone. Functions as co-chaperone for HSPA1B and negatively regulates the translocation of BAX from the cytosol to mitochondria in response to cellular stress, thereby protecting cells against apoptosis. Stimulates ATP hydrolysis, but not the folding of unfolded proteins mediated by HSPA1A (in vitro). Promotes apoptosis in response to cellular stress mediated by exposure to anisomycin or UV. This chain is DnaJ homolog subfamily A member 1 (DNAJA1), found in Bos taurus (Bovine).